We begin with the raw amino-acid sequence, 137 residues long: Nuclear transition protein 2 (137 aa).

Positions 1–21 (MDTKTQSLPNAHTQPHSNSGP) are enriched in polar residues. The interval 1-137 (MDTKTQSLPN…KRRSSGRKYN (137 aa)) is disordered. Residues H12, H16, H24, C29, C31, C35, and C38 each coordinate Zn(2+). The segment covering 22–74 (QSHACNQCSCSHHCQNCSQSCDRSQSCSRSRSSSQSPTGHRSLPGHQSQSLSP) has biased composition (low complexity). Over residues 78–91 (PRHRKRAMHSHRCP) the composition is skewed to basic residues. The short motif at 110-118 (GKANKRKGI) is the Nuclear localization signal element. A compositionally biased stretch (basic residues) spans 126 to 137 (KTKRRSSGRKYN). At S132 the chain carries Phosphoserine.

Belongs to the nuclear transition protein 2 family. In terms of tissue distribution, testis. Expression is restricted to haploid germ cells.

It localises to the nucleus. Its subcellular location is the nucleolus. It is found in the chromosome. In terms of biological role, plays a key role in the replacement of histones to protamine in the elongating spermatids of mammals. In condensing spermatids, loaded onto the nucleosomes, where it promotes the recruitment and processing of protamines, which are responsible for histone eviction. In Sus scrofa (Pig), this protein is Nuclear transition protein 2 (TNP2).